The primary structure comprises 326 residues: MLLNGEDGSMTIKINHVKEYEALVEIYKKEGLDTSLFGNRIAAIIISGDKIIGLNSVPGVKIRGEEVENGVKADIEIADNVKLPFPIHLCTGYLRSEGYQKVIFNIKIGKNSIVKFTSHCIFPYAKDFSHEALTSIKVGENSWVSYEDEHIHGEGVRMISKTEIELNKNARYTGKFSLTKHRAKELKLEMIANLGERSVLELESKVKAVKDDSVEVREVAYLKGAYSRANLKSTVIAFDEARANVVNEAYGFGDYAKGHVECHEIVKGNADVQTVPLLRVKNDKAELTHEASIGRINEAQLMQLMAKGLTDEEATELIIRGLLGEY.

Belongs to the iron-sulfur cluster assembly SufBD family.

This is Iron-sulfur cluster assembly SufBD family protein PH0883 from Pyrococcus horikoshii (strain ATCC 700860 / DSM 12428 / JCM 9974 / NBRC 100139 / OT-3).